Reading from the N-terminus, the 185-residue chain is ATP synthase subunit b 2 (185 aa).

A disordered region spans residues M1–F25. A helical membrane pass occupies residues A34–L56.

Belongs to the ATPase B chain family. As to quaternary structure, F-type ATPases have 2 components, F(1) - the catalytic core - and F(0) - the membrane proton channel. F(1) has five subunits: alpha(3), beta(3), gamma(1), delta(1), epsilon(1). F(0) has three main subunits: a(1), b(2) and c(10-14). The alpha and beta chains form an alternating ring which encloses part of the gamma chain. F(1) is attached to F(0) by a central stalk formed by the gamma and epsilon chains, while a peripheral stalk is formed by the delta and b chains.

It localises to the cell inner membrane. F(1)F(0) ATP synthase produces ATP from ADP in the presence of a proton or sodium gradient. F-type ATPases consist of two structural domains, F(1) containing the extramembraneous catalytic core and F(0) containing the membrane proton channel, linked together by a central stalk and a peripheral stalk. During catalysis, ATP synthesis in the catalytic domain of F(1) is coupled via a rotary mechanism of the central stalk subunits to proton translocation. Functionally, component of the F(0) channel, it forms part of the peripheral stalk, linking F(1) to F(0). The b'-subunit is a diverged and duplicated form of b found in plants and photosynthetic bacteria. The chain is ATP synthase subunit b 2 (atpF2) from Nitrobacter winogradskyi (strain ATCC 25391 / DSM 10237 / CIP 104748 / NCIMB 11846 / Nb-255).